The sequence spans 186 residues: Ribosome-recycling factor (186 aa).

The protein belongs to the RRF family.

The protein localises to the cytoplasm. In terms of biological role, responsible for the release of ribosomes from messenger RNA at the termination of protein biosynthesis. May increase the efficiency of translation by recycling ribosomes from one round of translation to another. In Rickettsia felis (strain ATCC VR-1525 / URRWXCal2) (Rickettsia azadi), this protein is Ribosome-recycling factor.